Reading from the N-terminus, the 392-residue chain is S-adenosylmethionine synthase (392 aa).

H17 is an ATP binding site. D19 contacts Mg(2+). E45 contributes to the K(+) binding site. Positions 58 and 102 each coordinate L-methionine. Positions 102 to 112 (QSADIAQGVDA) are flexible loop. ATP contacts are provided by residues 169–171 (DAK), 235–236 (KF), D244, 250–251 (RK), A267, and K271. D244 contributes to the L-methionine binding site. Position 275 (K275) interacts with L-methionine.

The protein belongs to the AdoMet synthase family. Homotetramer; dimer of dimers. Mg(2+) is required as a cofactor. K(+) serves as cofactor.

It localises to the cytoplasm. It carries out the reaction L-methionine + ATP + H2O = S-adenosyl-L-methionine + phosphate + diphosphate. It functions in the pathway amino-acid biosynthesis; S-adenosyl-L-methionine biosynthesis; S-adenosyl-L-methionine from L-methionine: step 1/1. In terms of biological role, catalyzes the formation of S-adenosylmethionine (AdoMet) from methionine and ATP. The overall synthetic reaction is composed of two sequential steps, AdoMet formation and the subsequent tripolyphosphate hydrolysis which occurs prior to release of AdoMet from the enzyme. This is S-adenosylmethionine synthase from Methylobacterium nodulans (strain LMG 21967 / CNCM I-2342 / ORS 2060).